The primary structure comprises 116 residues: Large ribosomal subunit protein uL18 (116 aa).

This sequence belongs to the universal ribosomal protein uL18 family. Part of the 50S ribosomal subunit; part of the 5S rRNA/L5/L18/L25 subcomplex. Contacts the 5S and 23S rRNAs.

This is one of the proteins that bind and probably mediate the attachment of the 5S RNA into the large ribosomal subunit, where it forms part of the central protuberance. The sequence is that of Large ribosomal subunit protein uL18 from Chromohalobacter salexigens (strain ATCC BAA-138 / DSM 3043 / CIP 106854 / NCIMB 13768 / 1H11).